We begin with the raw amino-acid sequence, 174 residues long: ATP-dependent protease subunit HslV (174 aa).

Thr2 is a catalytic residue. Na(+)-binding residues include Gly157, Cys160, and Thr163.

Belongs to the peptidase T1B family. HslV subfamily. As to quaternary structure, a double ring-shaped homohexamer of HslV is capped on each side by a ring-shaped HslU homohexamer. The assembly of the HslU/HslV complex is dependent on binding of ATP.

The protein localises to the cytoplasm. It carries out the reaction ATP-dependent cleavage of peptide bonds with broad specificity.. Allosterically activated by HslU binding. Functionally, protease subunit of a proteasome-like degradation complex believed to be a general protein degrading machinery. The sequence is that of ATP-dependent protease subunit HslV from Cellvibrio japonicus (strain Ueda107) (Pseudomonas fluorescens subsp. cellulosa).